We begin with the raw amino-acid sequence, 163 residues long: NADH-quinone oxidoreductase subunit I (163 aa).

4Fe-4S ferredoxin-type domains are found at residues 53-83 (LRRY…IEAG) and 94-123 (TLYD…LTPE). [4Fe-4S] cluster-binding residues include C63, C66, C69, C73, C103, C106, C109, and C113.

The protein belongs to the complex I 23 kDa subunit family. In terms of assembly, NDH-1 is composed of 14 different subunits. Subunits NuoA, H, J, K, L, M, N constitute the membrane sector of the complex. Requires [4Fe-4S] cluster as cofactor.

The protein resides in the cell inner membrane. The enzyme catalyses a quinone + NADH + 5 H(+)(in) = a quinol + NAD(+) + 4 H(+)(out). Functionally, NDH-1 shuttles electrons from NADH, via FMN and iron-sulfur (Fe-S) centers, to quinones in the respiratory chain. The immediate electron acceptor for the enzyme in this species is believed to be ubiquinone. Couples the redox reaction to proton translocation (for every two electrons transferred, four hydrogen ions are translocated across the cytoplasmic membrane), and thus conserves the redox energy in a proton gradient. The polypeptide is NADH-quinone oxidoreductase subunit I (Coxiella burnetii (strain Dugway 5J108-111)).